Consider the following 202-residue polypeptide: Hydrogenase expression/formation protein HupD (202 aa).

Ni(2+) contacts are provided by E28, D74, and H105.

It belongs to the peptidase A31 family.

Not known. Could be involved in the processing of hydrogenase. In Rhizobium leguminosarum bv. viciae, this protein is Hydrogenase expression/formation protein HupD (hupD).